The following is a 300-amino-acid chain: Glucose and ribitol dehydrogenase homolog (300 aa).

The segment covering 1–14 (MASQQFPPQNQETQ) has biased composition (polar residues). The interval 1–23 (MASQQFPPQNQETQPGKEHAMDP) is disordered. 44–68 (IVTGGDSGIGRAVCLCFALEGATVA) is an NAD(+) binding site. Residue S192 coordinates substrate. The Proton acceptor role is filled by Y205.

The protein belongs to the short-chain dehydrogenases/reductases (SDR) family.

May act as a short alcohol-polyol-sugar dehydrogenase possibly related to carbohydrate metabolism and the acquisition of desiccation tolerance. May also be involved in signal transduction. This Oryza sativa subsp. japonica (Rice) protein is Glucose and ribitol dehydrogenase homolog.